Consider the following 1017-residue polypeptide: Voltage-gated delayed rectifier potassium channel KCNH4 (1017 aa).

Topologically, residues 1-232 are cytoplasmic; it reads MPVMKGLLAP…YSIPKAVWDG (232 aa). Residues 14–90 form the PAS domain; the sequence is FLDTIATRFD…QRLQKALEGH (77 aa). The PAC domain maps to 93–145; it reads HRAEICFYRKDGSAFWCLLDMMPIKNELGEVVLFLFSFKDISQSGGPGLGSPG. The tract at residues 139 to 170 is disordered; the sequence is PGLGSPGIHGDNNNHENSLGRRGASSRLRSTR. Residues 233 to 253 traverse the membrane as a helical segment; it reads LILLATFYVAVTVPYNVCFAG. Residues 254 to 262 lie on the Extracellular side of the membrane; it reads DDDTPITSR. A helical membrane pass occupies residues 263–283; the sequence is HTLVSDIAVEMLFILDIILNF. The Cytoplasmic segment spans residues 284 to 305; sequence RTTYVSQSGQVVSAPRSIGLHY. The helical transmembrane segment at 306 to 326 threads the bilayer; that stretch reads LATWFFVDLIAALPFDLLYVF. The Extracellular portion of the chain corresponds to 327 to 334; it reads NITVTSLV. The chain crosses the membrane as a helical; Voltage-sensor span at residues 335-355; sequence HLLKTVRLLRLLRLLQKLERY. Over 356-364 the chain is Cytoplasmic; it reads SQCSAVVLT. Residues 365–385 form a helical membrane-spanning segment; sequence LLMSVFALLAHWMACVWYVIG. Residues 386-427 are Extracellular-facing; sequence RREMEANDPLLWDIGWLHELGKRLEEPYVNGSAGGPSRRSAY. N-linked (GlcNAc...) asparagine glycosylation occurs at Asn415. The segment at residues 428–448 is an intramembrane region (pore-forming); that stretch reads IAALYFTLSSLTSVGFGNVCA. The Selectivity filter motif lies at 440 to 445; sequence SVGFGN. At 449–454 the chain is on the extracellular side; it reads NTDAEK. A helical membrane pass occupies residues 455 to 475; sequence IFSICTMLIGALMHAVVFGNV. Residues 476-1017 are Cytoplasmic-facing; the sequence is TAIIQRMYSR…SFQSGSDTFH (542 aa). Residues 557 to 621 are cNMP-binding domain; sequence LFGAASRGCL…AILGKGDLIG (65 aa). Disordered stretches follow at residues 690–749 and 771–870; these read GSEN…PNLS and LVSS…ELAT. Over residues 703-726 the composition is skewed to polar residues; that stretch reads PRLSQARSDTLGSSSDKTLPSITE. Composition is skewed to low complexity over residues 771 to 786 and 806 to 820; these read LVSS…PALA and PPQL…FGPP. A coiled-coil region spans residues 873 to 907; that stretch reads AEEVKEKVCRLNQEISRLNQEVSQLSRELRQVMGL. Positions 972–1017 are disordered; it reads SELRSSMVPPFPSEPDPLGPSPVPEASPLTPSLLKHSFQSGSDTFH. Pro residues predominate over residues 980–996; it reads PPFPSEPDPLGPSPVPE. The segment covering 1008–1017 has biased composition (polar residues); that stretch reads SFQSGSDTFH.

This sequence belongs to the potassium channel family. H (Eag) (TC 1.A.1.20) subfamily. Kv12.3/KCNH4 sub-subfamily. The potassium channel is probably composed of a homo- or heterotetrameric complex of pore-forming alpha subunits that can associate with modulating beta subunits. In terms of tissue distribution, highly expressed in adult testis, and in adult and embryonic brain. In adult brain found in piriform cortex, olfactory tubercle, cerebral cortex, hippocampus pyramidial cells and dentate gyrus and basal ganglia of caudate/putamen and accumbens nucleus. Detected at intermediate levels in lung, spinal cord, and pituitary.

Its subcellular location is the membrane. The catalysed reaction is K(+)(in) = K(+)(out). Its function is as follows. Pore-forming (alpha) subunit of a voltage-gated delayed rectifier. Activates at more negative voltages, exhibits fast prepulse-independent activation kinetics and deactivates much more slowly, but shows no inactivation. This is Voltage-gated delayed rectifier potassium channel KCNH4 from Rattus norvegicus (Rat).